We begin with the raw amino-acid sequence, 172 residues long: uncharacterized protein (172 aa).

4 helical membrane-spanning segments follow: residues 20–40 (LVLI…EYIF), 48–68 (CVYE…ALII), 76–96 (LILI…HSFV), and 146–166 (MTEY…LILF).

Its subcellular location is the cell membrane. This is an uncharacterized protein from Rickettsia prowazekii (strain Madrid E).